The primary structure comprises 1132 residues: Sentrin-specific protease 6 (1132 aa).

Disordered stretches follow at residues 23 to 51 and 327 to 388; these read SKRD…DGAN and LPGG…VPST. Phosphoserine is present on residues Ser41, Ser355, Ser356, Ser371, and Ser373. Thr436 bears the Phosphothreonine mark. Lys648 participates in a covalent cross-link: Glycyl lysine isopeptide (Lys-Gly) (interchain with G-Cter in SUMO2). Residues 686 to 1132 are protease; sequence ISVTNEDLHC…QYASASGGSE (447 aa). Catalysis depends on residues His785 and Asp936. Ser938 bears the Phosphoserine mark. Cys1049 is a catalytic residue. Phosphoserine is present on Ser1131.

The protein belongs to the peptidase C48 family. In terms of assembly, interacts with RXRA. Forms a complex with KAT5-TIP60 and UBE2I in response to UV irradiation. Interacts with RPA1 to maintain it in hyposumoylated state during S phase preventing DNA repair initiation.

Its subcellular location is the nucleus. It participates in protein modification; protein sumoylation. Protease that deconjugates SUMO1, SUMO2 and SUMO3 from targeted proteins. Processes preferentially poly-SUMO2 and poly-SUMO3 chains, but does not efficiently process SUMO1, SUMO2 and SUMO3 precursors. Deconjugates SUMO1 from RXRA, leading to transcriptional activation. Involved in chromosome alignment and spindle assembly, by regulating the kinetochore CENPH-CENPI-CENPK complex. Desumoylates PML and CENPI, protecting them from degradation by the ubiquitin ligase RNF4, which targets polysumoylated proteins for proteasomal degradation. Also desumoylates RPA1, thus preventing recruitment of RAD51 to the DNA damage foci to initiate DNA repair through homologous recombination. This Mus musculus (Mouse) protein is Sentrin-specific protease 6 (Senp6).